We begin with the raw amino-acid sequence, 424 residues long: MYIKMATVANGQPDNSSLSSNPTGHMNGLTHSPGGAATIPMKDHDAIKLFIGQIPRNLDEKDLKPLFEEFGKIYELTVLKDRFTGMHKGCAFLTYCERESALKAQSALHEQKTLPGMNRPIQVKPADSESRGGCAFVKYSSHAEAQAAINALHGSQTMPGASSSLVVKFADTDKERTMRRMQQMAGQMGMFNPMAIQFGAYGAYAQALMQQQAAIMASVAQGGYLNPMAAFAAAQMQQMAALNMNGLAAAPMTPTSGGSTPPGITAPAVPSIPSPIGVNGFTGIPAQANGQPAAEAVFANGIHPYPAQSPTAADPLQQAYAGVQQYAAAYPAAYGQISQAFPQPPPMIPQQQREGPEGCNLFIYHLPQEFGDAELMQMFLPFGFVSFDNPASAQAAIQAMNGFQIGMKRLKVQLKRPKDANRPY.

The tract at residues 8–27 (VANGQPDNSSLSSNPTGHMN) is disordered. Polar residues predominate over residues 9-24 (ANGQPDNSSLSSNPTG). RRM domains lie at 47–128 (IKLF…PADS) and 342–417 (PQPP…LKRP).

Belongs to the CELF/BRUNOL family.

The protein resides in the nucleus. It is found in the cytoplasm. RNA-binding protein that may be implicated in the regulation of pre-mRNA alternative splicing. The chain is CUGBP Elav-like family member 4 (celf4) from Xenopus tropicalis (Western clawed frog).